Consider the following 425-residue polypeptide: Serine--tRNA ligase (425 aa).

An L-serine-binding site is contributed by Thr-233–Glu-235. Residue Arg-264–Glu-266 coordinates ATP. Glu-287 provides a ligand contact to L-serine. Glu-351–Ser-354 lines the ATP pocket. Ser-385 is a binding site for L-serine.

Belongs to the class-II aminoacyl-tRNA synthetase family. Type-1 seryl-tRNA synthetase subfamily. Homodimer. The tRNA molecule binds across the dimer.

It localises to the cytoplasm. It catalyses the reaction tRNA(Ser) + L-serine + ATP = L-seryl-tRNA(Ser) + AMP + diphosphate + H(+). The catalysed reaction is tRNA(Sec) + L-serine + ATP = L-seryl-tRNA(Sec) + AMP + diphosphate + H(+). It participates in aminoacyl-tRNA biosynthesis; selenocysteinyl-tRNA(Sec) biosynthesis; L-seryl-tRNA(Sec) from L-serine and tRNA(Sec): step 1/1. Its function is as follows. Catalyzes the attachment of serine to tRNA(Ser). Is also able to aminoacylate tRNA(Sec) with serine, to form the misacylated tRNA L-seryl-tRNA(Sec), which will be further converted into selenocysteinyl-tRNA(Sec). The polypeptide is Serine--tRNA ligase (Prochlorococcus marinus (strain SARG / CCMP1375 / SS120)).